The primary structure comprises 917 residues: DNA topoisomerase 1 beta (917 aa).

Positions 1–368 are disordered; sequence MATEAFVKPV…SLPSGDGQKK (368 aa). Residues 32-63 show a composition bias toward polar residues; the sequence is RNSNTAATTNRPSPINNAMRNSAIGSTKSSPP. The segment covering 66–82 has biased composition (low complexity); it reads SPLTSPNRSASSSTRSS. The segment covering 89–100 has biased composition (polar residues); sequence PSSSSVQRSTLK. 2 stretches are compositionally biased toward basic and acidic residues: residues 102–116 and 134–149; these read PLRD…ERNG and DKPL…KEVT. Positions 150 to 170 are enriched in polar residues; that stretch reads KQPSSSGRGSTQQAVQKSNMR. The segment covering 177–187 has biased composition (basic and acidic residues); sequence YTKKKVLDERA. Polar residues predominate over residues 189–205; the sequence is MSSTVQTKTSVGTSSSK. Composition is skewed to basic and acidic residues over residues 256–265 and 296–307; these read KLSEPARPVK and VKEDNSDGDDHV. S301 bears the Phosphoserine mark. Positions 316–338 are enriched in low complexity; the sequence is DSSNNKSSSAKPSSSKMIASSSR. 3 interaction with DNA regions span residues 575-576, 638-643, and 729-731; these read KY, RAGNEK, and TAK. A Topo IB-type catalytic domain is found at 582 to 912; sequence SSSLKGQSDK…MDVDPEFRFC (331 aa). Residues 779 to 858 are a coiled coil; sequence VSKSHGAQVE…ERDMQTKEDM (80 aa). Residue Y870 is the O-(3'-phospho-DNA)-tyrosine intermediate of the active site.

This sequence belongs to the type IB topoisomerase family.

Its subcellular location is the nucleus. It catalyses the reaction ATP-independent breakage of single-stranded DNA, followed by passage and rejoining.. In terms of biological role, releases the supercoiling and torsional tension of DNA introduced during the DNA replication and transcription by transiently cleaving and rejoining one strand of the DNA duplex. Introduces a single-strand break via transesterification at a target site in duplex DNA. The scissile phosphodiester is attacked by the catalytic tyrosine of the enzyme, resulting in the formation of a DNA-(3'-phosphotyrosyl)-enzyme intermediate and the expulsion of a 5'-OH DNA strand. The free DNA strand then rotates around the intact phosphodiester bond on the opposing strand, thus removing DNA supercoils. Finally, in the religation step, the DNA 5'-OH attacks the covalent intermediate to expel the active-site tyrosine and restore the DNA phosphodiester backbone. Topoisomerases 1 enzymes (TOP1A and TOP1B) are essential for plant survival. The polypeptide is DNA topoisomerase 1 beta (Arabidopsis thaliana (Mouse-ear cress)).